The following is a 155-amino-acid chain: Polyadenylate-binding protein-interacting protein 5 (155 aa).

A PAM2-like motif is present at residues 7–17 (ALNPHAASYVP). One can recognise a CUE domain in the interval 66–109 (DIDMDIEYLLVTFSGLSQESITDVYLANGGDLEATIEMLNQLEI). Residues 114-155 (SEENLPETLDIGDISESGPSTSKSTEVAASTSSVIPNAPVSA) form a disordered region. Polar residues predominate over residues 130 to 148 (SGPSTSKSTEVAASTSSVI).

Specifically expressed in immature siliques.

In terms of biological role, promotes polyploidy in dark-grown seedlings. Regulates the endocycle leading to hypocotyl elongation. The sequence is that of Polyadenylate-binding protein-interacting protein 5 (CID5) from Arabidopsis thaliana (Mouse-ear cress).